The primary structure comprises 401 residues: Imidazolonepropionase (401 aa).

The Fe(3+) site is built by H66 and H68. Zn(2+) contacts are provided by H66 and H68. The 4-imidazolone-5-propanoate site is built by R75, Y138, and H171. Y138 serves as a coordination point for N-formimidoyl-L-glutamate. H236 serves as a coordination point for Fe(3+). Residue H236 coordinates Zn(2+). Q239 serves as a coordination point for 4-imidazolone-5-propanoate. D311 contributes to the Fe(3+) binding site. D311 provides a ligand contact to Zn(2+). The N-formimidoyl-L-glutamate site is built by N313 and G315. T316 contributes to the 4-imidazolone-5-propanoate binding site.

This sequence belongs to the metallo-dependent hydrolases superfamily. HutI family. The cofactor is Zn(2+). Fe(3+) serves as cofactor.

It localises to the cytoplasm. It carries out the reaction 4-imidazolone-5-propanoate + H2O = N-formimidoyl-L-glutamate. It functions in the pathway amino-acid degradation; L-histidine degradation into L-glutamate; N-formimidoyl-L-glutamate from L-histidine: step 3/3. Its function is as follows. Catalyzes the hydrolytic cleavage of the carbon-nitrogen bond in imidazolone-5-propanoate to yield N-formimidoyl-L-glutamate. It is the third step in the universal histidine degradation pathway. This Acinetobacter baumannii (strain AB307-0294) protein is Imidazolonepropionase.